The chain runs to 525 residues: GMP synthase [glutamine-hydrolyzing] (525 aa).

Residues 9–207 (RILILDFGSQ…VQDICGCEAL (199 aa)) enclose the Glutamine amidotransferase type-1 domain. Residue Cys86 is the Nucleophile of the active site. Active-site residues include His181 and Glu183. Positions 208–400 (WTASNIVEDA…LGLPYDMVYR (193 aa)) constitute a GMPS ATP-PPase domain. 235-241 (SGGVDSS) contributes to the ATP binding site.

Homodimer.

It carries out the reaction XMP + L-glutamine + ATP + H2O = GMP + L-glutamate + AMP + diphosphate + 2 H(+). The protein operates within purine metabolism; GMP biosynthesis; GMP from XMP (L-Gln route): step 1/1. Catalyzes the synthesis of GMP from XMP. The polypeptide is GMP synthase [glutamine-hydrolyzing] (Pseudomonas entomophila (strain L48)).